The following is a 501-amino-acid chain: G protein-activated inward rectifier potassium channel 1 (501 aa).

The segment at 1–40 is disordered; sequence MSALRRKFGDDYQVVTTSSSGSGLQPQGPGQGPQQQLVPK. At 1–80 the chain is on the cytoplasmic side; it reads MSALRRKFGD…LFTTLVDLKW (80 aa). The span at 18 to 37 shows a compositional bias: low complexity; that stretch reads SSSGSGLQPQGPGQGPQQQL. A helical transmembrane segment spans residues 81–105; sequence RWNLFIFILTYTVAWLFMASMWWVI. Residues 106–129 lie on the Extracellular side of the membrane; it reads AYTRGDLNKAHVGNYTPCVANVYN. Asn-119 carries N-linked (GlcNAc...) asparagine glycosylation. Positions 130–141 form an intramembrane region, helical; Pore-forming; it reads FPSAFLFFIETE. Positions 142 to 148 form an intramembrane region, pore-forming; sequence ATIGYGY. Residues 143 to 148 carry the Selectivity filter motif; it reads TIGYGY. Residues 149-157 lie on the Extracellular side of the membrane; that stretch reads RYITDKCPE. Residues 158-179 traverse the membrane as a helical segment; sequence GIILFLFQSILGSIVDAFLIGC. At 180-501 the chain is on the cytoplasmic side; sequence MFIKMSQPKK…LRKMNSDRFT (322 aa). The tract at residues 182–209 is polyphosphoinositide (PIP2)-binding; sequence IKMSQPKKRAETLMFSEHAVISMRDGKL. Phosphoserine occurs at positions 385 and 424. Residues 456-467 are compositionally biased toward polar residues; the sequence is TKMLSDPMSQSV. Residues 456–501 form a disordered region; it reads TKMLSDPMSQSVADLPPKLQKMAGGPTRMEGNLPAKLRKMNSDRFT.

Belongs to the inward rectifier-type potassium channel (TC 1.A.2.1) family. KCNJ3 subfamily. In terms of assembly, associates with KCNJ5/GIRK4 or KCNJ6/GIRK2 to form a G-protein activated heteromultimer pore-forming unit. The resulting inward current is much larger. Associates with KCNJ9/GIRK3 to form a G-protein activated heteromultimer pore-forming unit.

It localises to the membrane. The enzyme catalyses K(+)(in) = K(+)(out). Heteromultimer composed of KCNJ3/GIRK1 and KCNJ5/GIRK4 is activated by phosphatidylinositol 4,5 biphosphate (PtdIns(4,5)P2). Functionally, inward rectifier potassium channels are characterized by a greater tendency to allow potassium to flow into the cell rather than out of it. Their voltage dependence is regulated by the concentration of extracellular potassium; as external potassium is raised, the voltage range of the channel opening shifts to more positive voltages. The inward rectification is mainly due to the blockage of outward current by internal magnesium. This potassium channel is controlled by G proteins. This receptor plays a crucial role in regulating the heartbeat. Forms a functional channel in association with KCNJ9/GIRK3. This is G protein-activated inward rectifier potassium channel 1 (Kcnj3) from Rattus norvegicus (Rat).